The sequence spans 339 residues: Protein-glutamate methylesterase/protein-glutamine glutaminase 2 (339 aa).

In terms of domain architecture, Response regulatory spans 2-119 (NIGIVNDLPL…GLSTDASPQA (118 aa)). Asp53 carries the post-translational modification 4-aspartylphosphate. The 196-residue stretch at 141–336 (PGPAPERGQP…PQLISRITRP (196 aa)) folds into the CheB-type methylesterase domain. Active-site residues include Ser158, His185, and Asp278.

Belongs to the CheB family. Post-translationally, phosphorylated by CheA. Phosphorylation of the N-terminal regulatory domain activates the methylesterase activity.

It is found in the cytoplasm. It carries out the reaction [protein]-L-glutamate 5-O-methyl ester + H2O = L-glutamyl-[protein] + methanol + H(+). The enzyme catalyses L-glutaminyl-[protein] + H2O = L-glutamyl-[protein] + NH4(+). Functionally, involved in chemotaxis. Part of a chemotaxis signal transduction system that modulates chemotaxis in response to various stimuli. Catalyzes the demethylation of specific methylglutamate residues introduced into the chemoreceptors (methyl-accepting chemotaxis proteins or MCP) by CheR. Also mediates the irreversible deamidation of specific glutamine residues to glutamic acid. In Burkholderia lata (strain ATCC 17760 / DSM 23089 / LMG 22485 / NCIMB 9086 / R18194 / 383), this protein is Protein-glutamate methylesterase/protein-glutamine glutaminase 2.